Consider the following 257-residue polypeptide: 3-methyl-2-oxobutanoate hydroxymethyltransferase (257 aa).

Positions 42 and 86 each coordinate Mg(2+). 3-methyl-2-oxobutanoate contacts are provided by residues 42–43 (DS), D86, and K116. E118 contributes to the Mg(2+) binding site. Catalysis depends on E185, which acts as the Proton acceptor.

It belongs to the PanB family. Homodecamer; pentamer of dimers. It depends on Mg(2+) as a cofactor.

Its subcellular location is the cytoplasm. The catalysed reaction is 3-methyl-2-oxobutanoate + (6R)-5,10-methylene-5,6,7,8-tetrahydrofolate + H2O = 2-dehydropantoate + (6S)-5,6,7,8-tetrahydrofolate. Its pathway is cofactor biosynthesis; (R)-pantothenate biosynthesis; (R)-pantoate from 3-methyl-2-oxobutanoate: step 1/2. In terms of biological role, catalyzes the reversible reaction in which hydroxymethyl group from 5,10-methylenetetrahydrofolate is transferred onto alpha-ketoisovalerate to form ketopantoate. This Prochlorococcus marinus (strain MIT 9312) protein is 3-methyl-2-oxobutanoate hydroxymethyltransferase.